The primary structure comprises 164 residues: Lipoprotein signal peptidase (164 aa).

3 helical membrane passes run 12-32 (WLWL…LILQ), 70-90 (WFFA…MYRS), and 102-122 (ALII…GFVV). Catalysis depends on residues Asp123 and Asp141. The chain crosses the membrane as a helical span at residues 137–157 (FNLADTAICVGAALIVLEGFL).

Belongs to the peptidase A8 family.

It is found in the cell inner membrane. It catalyses the reaction Release of signal peptides from bacterial membrane prolipoproteins. Hydrolyzes -Xaa-Yaa-Zaa-|-(S,diacylglyceryl)Cys-, in which Xaa is hydrophobic (preferably Leu), and Yaa (Ala or Ser) and Zaa (Gly or Ala) have small, neutral side chains.. It functions in the pathway protein modification; lipoprotein biosynthesis (signal peptide cleavage). Its function is as follows. This protein specifically catalyzes the removal of signal peptides from prolipoproteins. This is Lipoprotein signal peptidase from Shigella sonnei (strain Ss046).